Here is a 128-residue protein sequence, read N- to C-terminus: MAVRAFPGGHMREILTPPIVFKCLADDTRARMTLLIAREGELCVCELTHALELSQPKISRHLAQLREAGILMDRRKGQWVYYRLHPEVPQWVDAMLKGVVDANQEWLSPDALRLAEMGERPQSPVACA.

An HTH arsR-type domain is found at 11-103; sequence MREILTPPIV…AMLKGVVDAN (93 aa). Arsenite contacts are provided by Cys43 and Cys45. The segment at residues 44–67 is a DNA-binding region (H-T-H motif); that stretch reads VCELTHALELSQPKISRHLAQLRE.

In terms of assembly, homodimer.

It is found in the cytoplasm. Its function is as follows. Binds arsenite and regulates the expression of arsenic efflux pumps. In vitro, also binds antimony and bismuth, but not arsenate. The sequence is that of Arsenic resistance transcriptional regulator ArsR1 from Pseudomonas putida (strain ATCC 47054 / DSM 6125 / CFBP 8728 / NCIMB 11950 / KT2440).